Reading from the N-terminus, the 462-residue chain is Centrosomal protein of 55 kDa (462 aa).

Positions 1–11 (MSSRSPKDLIK) are enriched in basic and acidic residues. Residues 1 to 25 (MSSRSPKDLIKSKWGSRPSSSKSDT) are disordered. The span at 12-23 (SKWGSRPSSSKS) shows a compositional bias: low complexity. 2 coiled-coil regions span residues 50–185 (KVAN…QQWL) and 228–400 (YLQE…KQLH). A phosphoserine mark is found at Ser-96 and Ser-99. The tract at residues 157 to 235 (ANCFNSSMNS…EGYLQEEKQK (79 aa)) is interaction with TSG101. The segment at 160–214 (FNSSMNSIHEKEMQLKDALEKNQQWLVYDQQREAYVKGLLAKIFELEKRTETAAA) is interaction with PDCD6IP. The tract at residues 354–462 (QMQACTLDFE…LLVHVEYCMK (109 aa)) is required for localization to the interphase centrosome and to the midbody during cytokinesis. 2 positions are modified to phosphoserine: Ser-423 and Ser-426. Phosphothreonine is present on Thr-428. Position 434 is a phosphoserine; by PLK1 (Ser-434).

In terms of assembly, homodimer. Interacts (phosphorylated on Ser-423 and Ser-426) with PLK1; the interaction is indirect via the MTMR3:MTMR4 heterooligomer, occurs during early mitosis, regulates the phosphorylation of CEP55 by PLK1 and its recruitment to the midbody where it can mediate cell abscission. Interacts with AKAP9/CG-NAP; the interaction occurs in interphase and is lost upon mitotic entry. Interacts with PCNT/Kendrin; the interaction occurs in interphase and is lost upon mitotic entry. Directly interacts with PDCD6IP; this interaction is required for PDCD6IP targeting to the midbody; CEP55 binds PDCD6IP in a 2:1 stoichiometry; PDCD6IP competes with TSG101 for the same binding site. Interacts with TSG101; TSG101 competes with PDCD6IP for the same binding site; interaction is required for cytokinesis. Interacts with MVB12A, VPS37B, VPS37C and VPS28. There is a hierachy of phosphorylation, where both Ser-423 and Ser-426 are phosphorylated at the onset of mitosis, prior to Ser-434. Phosphorylation at Ser-423 and Ser-426 is required for dissociation from the centrosome at the G2/M boundary. Phosphorylation at the 3 sites, Ser-423, Ser-426 and Ser-434, is required for protein function at the final stages of cell division to complete cytokinesis successfully.

The protein localises to the cytoplasm. It is found in the cytoskeleton. The protein resides in the microtubule organizing center. It localises to the centrosome. Its subcellular location is the centriole. The protein localises to the cleavage furrow. It is found in the midbody. The protein resides in the midbody ring. Plays a role in mitotic exit and cytokinesis. Recruits PDCD6IP and TSG101 to midbody during cytokinesis. Required for successful completion of cytokinesis. Not required for microtubule nucleation. Plays a role in the development of the brain and kidney. The chain is Centrosomal protein of 55 kDa from Rattus norvegicus (Rat).